Consider the following 375-residue polypeptide: tRNA-specific 2-thiouridylase MnmA 3 (375 aa).

Residues 11 to 18 (GMSGGIDS) and methionine 37 contribute to the ATP site. Catalysis depends on cysteine 104, which acts as the Nucleophile. The cysteines at positions 104 and 201 are disulfide-linked. ATP is bound at residue glycine 128. Positions 150–152 (KDQ) are interaction with tRNA. Catalysis depends on cysteine 201, which acts as the Cysteine persulfide intermediate. Residues 309–310 (RY) are interaction with tRNA.

This sequence belongs to the MnmA/TRMU family.

It is found in the cytoplasm. It catalyses the reaction S-sulfanyl-L-cysteinyl-[protein] + uridine(34) in tRNA + AH2 + ATP = 2-thiouridine(34) in tRNA + L-cysteinyl-[protein] + A + AMP + diphosphate + H(+). Functionally, catalyzes the 2-thiolation of uridine at the wobble position (U34) of tRNA, leading to the formation of s(2)U34. In Phocaeicola vulgatus (strain ATCC 8482 / DSM 1447 / JCM 5826 / CCUG 4940 / NBRC 14291 / NCTC 11154) (Bacteroides vulgatus), this protein is tRNA-specific 2-thiouridylase MnmA 3.